The following is a 127-amino-acid chain: Mediator of RNA polymerase II transcription subunit 31 (127 aa).

Belongs to the Mediator complex subunit 31 family. In terms of assembly, component of the Mediator complex, which is composed of at least 21 subunits that form three structurally distinct submodules. The Mediator head module contains MED6, MED8, MED11, SRB4/MED17, SRB5/MED18, ROX3/MED19, SRB2/MED20 and SRB6/MED22, the middle module contains MED1, MED4, NUT1/MED5, MED7, CSE2/MED9, NUT2/MED10, SRB7/MED21 and SOH1/MED31, and the tail module contains MED2, PGD1/MED3, RGR1/MED14, GAL11/MED15 and SIN4/MED16. The head and the middle modules interact directly with RNA polymerase II, whereas the elongated tail module interacts with gene-specific regulatory proteins.

Its subcellular location is the nucleus. Functionally, component of the Mediator complex, a coactivator involved in the regulated transcription of nearly all RNA polymerase II-dependent genes. Mediator functions as a bridge to convey information from gene-specific regulatory proteins to the basal RNA polymerase II transcription machinery. The Mediator complex, having a compact conformation in its free form, is recruited to promoters by direct interactions with regulatory proteins and serves for the assembly of a functional preinitiation complex with RNA polymerase II and the general transcription factors. The Mediator complex unfolds to an extended conformation and partially surrounds RNA polymerase II, specifically interacting with the unphosphorylated form of the C-terminal domain (CTD) of RNA polymerase II. The Mediator complex dissociates from the RNA polymerase II holoenzyme and stays at the promoter when transcriptional elongation begins. The protein is Mediator of RNA polymerase II transcription subunit 31 (SOH1) of Saccharomyces cerevisiae (strain ATCC 204508 / S288c) (Baker's yeast).